The following is a 288-amino-acid chain: Transmembrane protein 163 (288 aa).

Residues 1–64 form a disordered region; sequence MEPALGSERR…ESGQFSDGLE (64 aa). At 1–87 the chain is on the cytoplasmic side; sequence MEPALGSERR…HEAQNYRKKA (87 aa). Position 11 is a phosphoserine (Ser-11). Residues 12 to 24 are compositionally biased toward pro residues; it reads PPGPGVPRPPPRG. Residues 25-42 show a composition bias toward low complexity; it reads HAPSTAAPAPSPAPMSSS. The tract at residues 41–71 is required for interaction with MCOLN1; sequence SSVQSDEERQPRISESGQFSDGLEDRGLLES. Phosphoserine is present on residues Ser-45, Ser-54, Ser-56, and Ser-60. The helical transmembrane segment at 88–108 threads the bilayer; it reads LWVSWLSIIVTLALAVAAFTV. Residues 109–115 lie on the Extracellular side of the membrane; that stretch reads SVMRYSA. A helical membrane pass occupies residues 116 to 136; the sequence is SAFGFAFDAILDVLSSAIVLW. Residues 137–149 are Cytoplasmic-facing; that stretch reads RYSNAAAVHSANR. A helical transmembrane segment spans residues 150–170; sequence EYIACVILGVIFLLSSICIVV. At 171 to 186 the chain is on the extracellular side; that stretch reads KAIHDLSTRLLPEVDD. The helical transmembrane segment at 187–207 threads the bilayer; it reads FLFSVSILSGILCSVLAVLKF. Residues 208–216 lie on the Cytoplasmic side of the membrane; sequence MLGKVLTSR. Residues 217–237 form a helical membrane-spanning segment; it reads ALITDGFNSLVGGVMGFSILL. Topologically, residues 238–254 are extracellular; sequence SAEVFKHNAAVWYLDGS. A helical transmembrane segment spans residues 255–275; it reads IGVLIGLTIFAYGVKLLIDMV. The Cytoplasmic segment spans residues 276–288; sequence PRVRQTRHYEMFE.

The protein belongs to the TMEM163 family. In terms of assembly, homodimer. Interacts with MCOLN1. Interacts with SLC30A1, SLC30A2, SLC30A3 and SLC30A4. As to expression, widely expressed, with high expression in the brain, cerebellum, heart, lung and spleen. In the brain, mainly expressed in the glutaminergic neuron subpopulations.

It is found in the cytoplasmic vesicle. The protein localises to the secretory vesicle. It localises to the synaptic vesicle membrane. The protein resides in the early endosome membrane. Its subcellular location is the late endosome membrane. It is found in the lysosome membrane. The protein localises to the cell membrane. It carries out the reaction Zn(2+)(in) = Zn(2+)(out). Functionally, zinc ion transporter that mediates zinc efflux and plays a crucial role in intracellular zinc homeostasis. Binds the divalent cations Zn(2+), Ni(2+), and to a minor extent Cu(2+). Is a functional modulator of P2X purinoceptors, including P2RX1, P2RX3, P2RX4 and P2RX7. Plays a role in central nervous system development and is required for myelination, and survival and proliferation of oligodendrocytes. The polypeptide is Transmembrane protein 163 (Tmem163) (Mus musculus (Mouse)).